The following is a 547-amino-acid chain: Sodium-coupled neutral amino acid transporter 4 (547 aa).

The interval Met-1–Ile-30 is disordered. Topologically, residues Met-1 to Gly-104 are extracellular. Residue Ser-49 is modified to Phosphoserine. A helical membrane pass occupies residues Ile-105–Leu-125. The Cytoplasmic segment spans residues Leu-126–Lys-151. Residues Ile-152–Ile-172 form a helical membrane-spanning segment. The Extracellular portion of the chain corresponds to Ile-173 to Tyr-195. Residues Leu-196–Leu-216 traverse the membrane as a helical segment. The Cytoplasmic portion of the chain corresponds to Lys-217–Gly-220. Residues Tyr-221–Ile-241 traverse the membrane as a helical segment. Residues Tyr-242–Thr-332 are Extracellular-facing. Residues Cys-249 and Cys-321 are joined by a disulfide bond. Residues Asn-260, Asn-264, and Asn-276 are each glycosylated (N-linked (GlcNAc...) asparagine). Residues Ala-333 to Tyr-353 form a helical membrane-spanning segment. Topologically, residues Ser-354–Asn-369 are cytoplasmic. A helical membrane pass occupies residues Ile-370–Phe-390. Residues Tyr-391–Pro-411 lie on the Extracellular side of the membrane. A helical membrane pass occupies residues Leu-412–Phe-432. Over Pro-433–His-453 the chain is Cytoplasmic. A helical transmembrane segment spans residues Phe-454–Ile-474. Topologically, residues Lys-475–Tyr-476 are extracellular. The helical transmembrane segment at Ile-477 to Phe-497 threads the bilayer. Topologically, residues Tyr-498–Gly-514 are cytoplasmic. Residues Ala-515–Ile-535 traverse the membrane as a helical segment. Over Asp-536–His-547 the chain is Extracellular.

Belongs to the amino acid/polyamine transporter 2 family. Post-translationally, the disulfide bond plays an important role in substrate transport, but has no effect on trafficking to the cell surface. Expressed almost exclusively in embryonic and adult liver, and at lower levels in the kidney. Expressed at lower levels in adult muscle and pancreas. Detected in fetal blood vessels. Expressed in syncytiotrophoblas of placenta during first trimester and at term. Highly expressed in first trimester placenta compared to term placenta.

It localises to the cell membrane. The protein localises to the cell projection. The protein resides in the microvillus membrane. It carries out the reaction L-methionine(in) + Na(+)(in) = L-methionine(out) + Na(+)(out). It catalyses the reaction L-asparagine(in) + Na(+)(in) = L-asparagine(out) + Na(+)(out). The catalysed reaction is L-threonine(in) + Na(+)(in) = L-threonine(out) + Na(+)(out). The enzyme catalyses L-serine(in) + Na(+)(in) = L-serine(out) + Na(+)(out). It carries out the reaction glycine(in) + Na(+)(in) = glycine(out) + Na(+)(out). It catalyses the reaction L-alanine(in) + Na(+)(in) = L-alanine(out) + Na(+)(out). The catalysed reaction is L-glutamine(in) + Na(+)(in) = L-glutamine(out) + Na(+)(out). The enzyme catalyses L-histidine(in) + Na(+)(in) = L-histidine(out) + Na(+)(out). It carries out the reaction L-cysteine(in) + Na(+)(in) = L-cysteine(out) + Na(+)(out). It catalyses the reaction L-proline(in) + Na(+)(in) = L-proline(out) + Na(+)(out). Functionally, symporter that cotransports neutral amino acids and sodium ions from the extraccellular to the intracellular side of the cell membrane. The transport is electrogenic, pH dependent and partially tolerates substitution of Na(+) by Li(+). Preferentially transports smaller amino acids, such as glycine, L-alanine, L-serine, L-asparagine and L-threonine, followed by L-cysteine, L-histidine, L-proline and L-glutamine and L-methionine. The protein is Sodium-coupled neutral amino acid transporter 4 of Homo sapiens (Human).